A 465-amino-acid chain; its full sequence is Hexon protein (465 aa).

The interval 1-51 is disordered; that stretch reads AYNALAPKGAPNSCEWEQNETAQVDAQELDEEENEANEAQAREQEQAKKTH. Over residues 15 to 24 the composition is skewed to polar residues; the sequence is EWEQNETAQV. A compositionally biased stretch (acidic residues) spans 27 to 36; the sequence is QELDEEENEA.

It belongs to the adenoviridae hexon protein family. Homotrimer. Interacts with the capsid vertex protein; this interaction binds the peripentonal hexons to the neighboring penton base. Interacts with the hexon-linking protein; this interaction tethers the hexons surrounding the penton to those situated in the central plate of the facet. Interacts with the hexon-interlacing protein; this interaction lashes the hexons together. Interacts with host dyneins DYNC1LI1 and DYNC1I2; this interaction might be involved in intracellular microtubule-dependent transport of incoming viral capsid. Interacts with the shutoff protein; this interaction allows folding and formation of hexons trimers. Interacts with pre-protein VI; this interaction probably allows nuclear import of hexon trimers and possibly pre-capsid assembly.

Its subcellular location is the virion. The protein localises to the host nucleus. Major capsid protein that self-associates to form 240 hexon trimers, each in the shape of a hexagon, building most of the pseudo T=25 capsid. Assembled into trimeric units with the help of the chaperone shutoff protein. Transported by pre-protein VI to the nucleus where it associates with other structural proteins to form an empty capsid. Might be involved, through its interaction with host dyneins, in the intracellular microtubule-dependent transport of incoming viral capsid to the nucleus. This Homo sapiens (Human) protein is Hexon protein.